The sequence spans 410 residues: Transcription factor E2F4 (410 aa).

The tract at residues 1 to 20 (MAEAGPQAPPPPGTPSRHEK) is disordered. Ala2 is modified (N-acetylalanine). A DNA-binding region spans residues 16–85 (SRHEKSLGLL…KNSIQWKGVG (70 aa)). Positions 43 to 65 (LKLAADTLAVRQKRRIYDITNVL) are leucine-zipper. The DEF box signature appears at 48–85 (DTLAVRQKRRIYDITNVLEGIGLIEKKSKNSIQWKGVG). Residues 86 to 181 (PGCNTREIAD…GLNGQKKYQI (96 aa)) are dimerization. Disordered stretches follow at residues 203-258 (PPVA…GSTQ) and 303-341 (SALL…DPTG). Low complexity-rich tracts occupy residues 231–252 (PALA…TPTP) and 308–324 (SSSS…SSSS). The segment at 334 to 410 (PIKADPTGVL…DLFDVPVLKL (77 aa)) is transactivation. Ser381 is subject to Phosphoserine. Positions 386-389 (DHDY) match the HCFC1-binding-motif (HBM) motif. The interval 387–404 (HDYIYNLDESEGVCDLFD) is interaction with RBL1 and RBL2.

It belongs to the E2F/DP family. In terms of assembly, component of the DRTF1/E2F transcription factor complex. Binds cooperatively with TFDP1/Dp-1 to E2F sites. The E2F4/TFDP1 dimer interacts preferentially with pocket protein RBL1, which inhibits the E2F transactivation domain. Lower affinity interaction has been found with retinoblastoma protein RB1. Interacts with TRRAP, which probably mediates its interaction with histone acetyltransferase complexes, leading to transcription activation. Interacts with HCFC1. Component of the DREAM complex (also named LINC complex) at least composed of E2F4, E2F5, LIN9, LIN37, LIN52, LIN54, MYBL1, MYBL2, RBL1, RBL2, RBBP4, TFDP1 and TFDP2. The complex exists in quiescent cells where it represses cell cycle-dependent genes. It dissociates in S phase when LIN9, LIN37, LIN52 and LIN54 form a subcomplex that binds to MYBL2. Interacts with PML. Interacts with CEBPA (when phosphorylated). Differentially phosphorylated in vivo.

The protein resides in the nucleus. Its function is as follows. Transcription activator that binds DNA cooperatively with DP proteins through the E2 recognition site, 5'-TTTC[CG]CGC-3' found in the promoter region of a number of genes whose products are involved in cell cycle regulation or in DNA replication. The DRTF1/E2F complex functions in the control of cell-cycle progression from G1 to S phase. E2F4 binds with high affinity to RBL1 and RBL2. In some instances can also bind RB1. Specifically required for multiciliate cell differentiation: together with MCIDAS and E2F5, binds and activate genes required for centriole biogenesis. This chain is Transcription factor E2F4 (E2f4), found in Mus musculus (Mouse).